The primary structure comprises 354 residues: MAELKNDRYLRALLKQPVDMTPVWMMRQAGRYLPEYKATRAQAGDFMSLCKNHELACEVTLQPLRRYELDAAILFSDILTVPDAMGLGLYFEAGEGPRFERPTDTIDAIKKLSIPDPEDELGYVMKAVSTIRRELNGAVPLIGFSGSPWTLATYMVEGGSSKTFEKIKKMAYAEPAALHMLLDKLADSVILYLNAQVANGAQSLMIFDSWGGALSHTAYREFSLRYMQKIVDGLTRFADGRQVPVTLFTKGGGLWLEAMAETGCDALGLDWTVDIADARRRVGHKVALQGNMDPSMLYAPIPRIEEEVSQILAGYGEGTGHVFNLGHGIHQHVDPEHAGAFIKAVHAQSKQYHK.

Substrate contacts are provided by residues 27 to 31 (RQAGR), D77, Y154, S209, and H327.

It belongs to the uroporphyrinogen decarboxylase family. Homodimer.

It localises to the cytoplasm. The catalysed reaction is uroporphyrinogen III + 4 H(+) = coproporphyrinogen III + 4 CO2. It functions in the pathway porphyrin-containing compound metabolism; protoporphyrin-IX biosynthesis; coproporphyrinogen-III from 5-aminolevulinate: step 4/4. Functionally, catalyzes the decarboxylation of four acetate groups of uroporphyrinogen-III to yield coproporphyrinogen-III. This chain is Uroporphyrinogen decarboxylase, found in Shewanella putrefaciens (strain CN-32 / ATCC BAA-453).